The primary structure comprises 355 residues: MSFDVLTINPGSTSTKLAVYQGDKVLFEETVRHTMQELADFNNVQEQFDFRWQVLRRVMDAHGYDVKNLQAVVGRGGLLRPVAGGTYMVTEKMIDDLKENKYGEHASNLGAMLAKKLADELTIPSFIVDPVVVDEMQEIARISGNAFVARKSIFHALNHKAAGRKIAKELGNDYEKMNFVIAHLGGGISVAAHRQGRVVDVNNALDGDGPFSPERSGSLPMNDFLEACFSGKWTKRELHELIVGRGGMISYLGTNSMLEVEAKVQAGDVKAMEAFDAMAYQVSKEIGACSVVLQGKIDAIILTGGLARSELFTSKIIEQTNWITSVIIEPGEDELEALNSGVQRVLAGLEKEKEY.

Belongs to the acetokinase family.

Its subcellular location is the cytoplasm. The catalysed reaction is butanoate + ATP = butanoyl phosphate + ADP. In Listeria monocytogenes serotype 4a (strain HCC23), this protein is Probable butyrate kinase.